Consider the following 443-residue polypeptide: Threonine/serine transporter TdcC (443 aa).

A run of 11 helical transmembrane segments spans residues 22–42, 44–64, 97–117, 140–160, 163–183, 207–227, 261–281, 311–331, 366–386, 389–409, and 423–443; these read TTWTLGLFGTAIGAGVLFFPI, AGFGGLIPILLMLVLAYPIAF, GVVITFLYFFAICPLLWIYGV, FVALFLLLLMAFVIWFGKDLM, VMSYLVWPFIASLVLISLSLI, ILITVWLGISIMVFSFNFSPI, MLMVAVVMFFAFSCLFTLSPA, FAITLEYAASIIALVAIFKSF, ISMIFIMGSTWVVAYANPNIL, IEAMGAPIIASLLCLLPMYAI, and DNVFVTVIGLLTILNIVYKLF.

It belongs to the amino acid/polyamine transporter 2 family. SdaC/TdcC subfamily.

It is found in the cell inner membrane. It carries out the reaction L-threonine(in) + H(+)(in) = L-threonine(out) + H(+)(out). It catalyses the reaction L-serine(in) + H(+)(in) = L-serine(out) + H(+)(out). In terms of biological role, involved in the import of threonine and serine into the cell, with the concomitant import of a proton (symport system). This chain is Threonine/serine transporter TdcC, found in Shigella sonnei (strain Ss046).